Reading from the N-terminus, the 462-residue chain is Tissue alpha-L-fucosidase (462 aa).

An N-terminal signal peptide occupies residues 1 to 28 (MWDLKSEWWAVGFGLLLLLAASAQAGGL). 3 N-linked (GlcNAc...) asparagine glycosylation sites follow: Asn-237, Asn-264, and Asn-378.

It belongs to the glycosyl hydrolase 29 family. Homotetramer.

It is found in the lysosome. It carries out the reaction an alpha-L-fucoside + H2O = L-fucose + an alcohol. It catalyses the reaction a neolactoside IV(2)-alpha-Fuc-nLc4Cer(d18:1(4E)) + H2O = a neolactoside nLc4Cer(d18:1(4E)) + L-fucose. The catalysed reaction is a neolactoside IV(2)-alpha-Fuc-nLc4Cer(d18:0) + H2O = a neolactoside nLc4Cer(d18:0) + L-fucose. Functionally, alpha-L-fucosidase is responsible for hydrolyzing the alpha-1,6-linked fucose joined to the reducing-end N-acetylglucosamine of the carbohydrate moieties of glycoproteins. The chain is Tissue alpha-L-fucosidase (Fuca1) from Rattus norvegicus (Rat).